The following is a 233-amino-acid chain: Lipoprotein-releasing system ATP-binding protein LolD (233 aa).

Positions 6-233 (LQCDNLCKRY…TAELSLMGAE (228 aa)) constitute an ABC transporter domain. Position 42 to 49 (42 to 49 (GSSGSGKS)) interacts with ATP.

This sequence belongs to the ABC transporter superfamily. Lipoprotein translocase (TC 3.A.1.125) family. In terms of assembly, the complex is composed of two ATP-binding proteins (LolD) and two transmembrane proteins (LolC and LolE).

The protein resides in the cell inner membrane. Part of the ABC transporter complex LolCDE involved in the translocation of mature outer membrane-directed lipoproteins, from the inner membrane to the periplasmic chaperone, LolA. Responsible for the formation of the LolA-lipoprotein complex in an ATP-dependent manner. The protein is Lipoprotein-releasing system ATP-binding protein LolD of Shigella boydii serotype 4 (strain Sb227).